Reading from the N-terminus, the 174-residue chain is ATP-dependent protease subunit HslV (174 aa).

Threonine 2 is an active-site residue. Positions 157, 160, and 163 each coordinate Na(+).

The protein belongs to the peptidase T1B family. HslV subfamily. In terms of assembly, a double ring-shaped homohexamer of HslV is capped on each side by a ring-shaped HslU homohexamer. The assembly of the HslU/HslV complex is dependent on binding of ATP.

The protein localises to the cytoplasm. It catalyses the reaction ATP-dependent cleavage of peptide bonds with broad specificity.. Its activity is regulated as follows. Allosterically activated by HslU binding. Functionally, protease subunit of a proteasome-like degradation complex believed to be a general protein degrading machinery. The sequence is that of ATP-dependent protease subunit HslV from Shewanella sediminis (strain HAW-EB3).